The primary structure comprises 43 residues: Delta/kappa-actitoxin-Avd4a (43 aa).

Intrachain disulfides connect Cys4–Cys39, Cys6–Cys32, and Cys22–Cys40.

This sequence belongs to the sea anemone type 3 (BDS) potassium channel toxin family.

It localises to the secreted. The protein localises to the nematocyst. Its function is as follows. Acts as a gating modifier on both Kv and Nav ion channels, and also acts on blood pressure. Voltage-dependently inhibits voltage-gated potassium channels Kv3 (Kv3.1/KCNC1, Kv3.2/KCNC2 and Kv3.4/KCNC4) and slows inactivation of the voltage-gated sodium channel Nav1.7/SCN9A. Inhibits all Kv3.1, Kv3.2 and Kv3.4 by about 50% when tested at a voltage of +40 mV (45%, 48% and 56%, respectively). May act by binding residues in voltage-sensing domains S3b and S4 of Kv3. On sodium channel, tests have been done on human Nav1.7/SCN9A (expressed in HEK293 cells) (EC(50)=3 nM) and rat SCG neurons that mostly carry Nav1.7 channels (EC(50)=300 nM). This toxin also reduces blood pressure. The sequence is that of Delta/kappa-actitoxin-Avd4a from Anemonia sulcata (Mediterranean snakelocks sea anemone).